Here is a 284-residue protein sequence, read N- to C-terminus: 2-dehydro-3-deoxyphosphooctonate aldolase (284 aa).

Belongs to the KdsA family.

It localises to the cytoplasm. The catalysed reaction is D-arabinose 5-phosphate + phosphoenolpyruvate + H2O = 3-deoxy-alpha-D-manno-2-octulosonate-8-phosphate + phosphate. The protein operates within carbohydrate biosynthesis; 3-deoxy-D-manno-octulosonate biosynthesis; 3-deoxy-D-manno-octulosonate from D-ribulose 5-phosphate: step 2/3. It functions in the pathway bacterial outer membrane biogenesis; lipopolysaccharide biosynthesis. This is 2-dehydro-3-deoxyphosphooctonate aldolase from Enterobacter sp. (strain 638).